Consider the following 218-residue polypeptide: MSENEIKGILGTKLGMTQIFDEENRVIPVTVVEAGPCVVSQIRTVETDGYNAIQIAYGEIDPRKVNQPLTGHFKKAGVTPRRHVTEIRMDDVSGYEVGQDVTVEIFNDVKFVDVTGTSKGKGYAGAMKRHGFAGQGAGHGNQAAHRRVGGIGAAATPGRIFKGKRMAGRMGNDRVTTQNLKVQKIDADANLILIKGAIPGNRGGIVTVKTAVKGGAHA.

It belongs to the universal ribosomal protein uL3 family. As to quaternary structure, part of the 50S ribosomal subunit. Forms a cluster with proteins L14 and L19.

Functionally, one of the primary rRNA binding proteins, it binds directly near the 3'-end of the 23S rRNA, where it nucleates assembly of the 50S subunit. This chain is Large ribosomal subunit protein uL3, found in Corynebacterium efficiens (strain DSM 44549 / YS-314 / AJ 12310 / JCM 11189 / NBRC 100395).